The following is a 920-amino-acid chain: MARKSFPSGQIIPTDLHEEMERSYLEYAMSVIVGRALPDVRDGLKPVHRRILYAMYELGLTPDRPFRKCARVVGDVLGKYHPHGDQSVYDALVRMVQDFSSRYPLLAGHGNFGSVDNDPPAAMRYTETRLAPIAMGAMLEGISEAIVDFTGNFDNSQEEPTVVPAQLPLLLLNGCSGIAVGMATSIPPHNLGEVVDGLIGLINKPDLSDQELFKLIPGPDFPTGGHILDSEGILQAYQTGRGLIPVRGVSHIETIRGEKKRSHNRTAIVITELPFQVNKAAWIEKIASLVNDGKLDGISDLRDESDRTGMRVVIELKRDAEPNAILQKLYRMTPLQSNFGVIFLALVNNQPVQMSLRQILQEFLQFREDTLLRQYENELGENRRRLELLTGLLIGLENLDALIEILRFAADGTTAKIQLQERLGISLQQGDAILGMPMRRITGLEREKLQQEHTDLAQRIEQLETLIGDRQERLKALKKELRGLKKKFADERRTKILQGMPAKIEPLPVNQDPLPEATIPPVESQSAPEEELDSPGEPEQEQLVLENSSPPTADSAPEAKQDDLNLAVKPTPKTVKQEAQPSPEVIATHSKLVSVAEKNPLTLFTPQTPPAEAFLSINLQGEIAWHPEELTSANSFEPLDQQFSIQGRETLIVIGDHGKAFPVAIADIPPLAVTRIPLLQILPKSAQRDATTVTFQGFLPPPEQPQDLLLVSQQGRVKLLAGQELQELGPRGLSLMKLKNGDLLQFAQLVTPVNPASAQNPGKNLVIATSNGRLLRFDPAQVGLTCSSPSAQGQEAMRLRATESLVGVLMASPGDRVLLLTQAGYGKQLDLASVRLGNFGELGTTVMQFTSKADRLLTMVAANQGAQSPQSSTYDFYSNQQRLHSVQADQFQPWGKDGFGDRLVDLNEGEHLITQVAHLG.

The Topo IIA-type catalytic domain occupies 37–509 (LPDVRDGLKP…MPAKIEPLPV (473 aa)). Y125 serves as the catalytic O-(5'-phospho-DNA)-tyrosine intermediate. The tract at residues 499–566 (GMPAKIEPLP…PEAKQDDLNL (68 aa)) is disordered. Residues 528 to 540 (PEEELDSPGEPEQ) are compositionally biased toward acidic residues.

It belongs to the type II topoisomerase GyrA/ParC subunit family. Heterotetramer composed of ParC and ParE.

The protein localises to the cell membrane. The enzyme catalyses ATP-dependent breakage, passage and rejoining of double-stranded DNA.. In terms of biological role, topoisomerase IV is essential for chromosome segregation. It relaxes supercoiled DNA. Performs the decatenation events required during the replication of a circular DNA molecule. The protein is DNA topoisomerase 4 subunit A (parC) of Synechocystis sp. (strain ATCC 27184 / PCC 6803 / Kazusa).